Here is a 470-residue protein sequence, read N- to C-terminus: MNSSYHPPDMSQRMPGPGYSSSVPPPIHAYQQQQQHQHPPPSLLPPPPTQHHHSSHAPPPPPPPSSSSHSLSSHQHHAPPPPHHHSQLPPYPPTQYQQPHPNQYPRPHPLPPSRNDEPPPPSSEPSPSDQHEKPKYEPPSVSKIEEGTGLKYSLDVQQQPIRARMCGFGDKDRRPITPPPCVRLVIINSETGKEVDYNTLDHAMFVLSVDLWDKDGIKEVNLVRSSTGPGSGASSNNYSYSTLEPSTPSYQQQALPPSRESGYPQGQGLGYAQEYPPSVQQGYGQAPSYQSSSSYGPPQQYFPRHSGYNTDPPASSANPLFRNGYGQDQNALTRMAVVGTQPQGMFTRNLIGSLAASAFRLNDTDKKAGIWFVLQDLSVRTEGTFRLRFSFVNVGGAGGGLPIHVNQGRAPILASCYSQDFSVYSAKKFPGVCESTPLSKTFALQGIKIPIRKDTNIKGEGDEEMMYDQN.

2 disordered regions span residues 1–148 (MNSS…EEGT) and 223–321 (VRSS…NPLF). A compositionally biased stretch (low complexity) spans 15–37 (PGPGYSSSVPPPIHAYQQQQQHQ). Pro residues predominate over residues 38–49 (HPPPSLLPPPPT). Residues 74–86 (HQHHAPPPPHHHS) show a composition bias toward basic residues. Residues 102 to 124 (NQYPRPHPLPPSRNDEPPPPSSE) show a composition bias toward pro residues. In terms of domain architecture, Velvet spans 147–452 (GTGLKYSLDV…ALQGIKIPIR (306 aa)). Positions 232–241 (GASSNNYSYS) are enriched in low complexity. A compositionally biased stretch (polar residues) spans 242–255 (TLEPSTPSYQQQAL). Low complexity predominate over residues 280–301 (QQGYGQAPSYQSSSSYGPPQQY). Polar residues predominate over residues 307–318 (GYNTDPPASSAN).

This sequence belongs to the velvet family. VelB subfamily. Component of the heterotrimeric velvet complex composed of laeA, veA and velB; VeA acting as a bridging protein between laeA and velB. Forms a heterodimeric complex with vosA; the formation of the velB-vosA complex is light-dependent.

The protein localises to the nucleus. The protein resides in the cytoplasm. In terms of biological role, component of the velvet transcription factor complex that controls sexual/asexual developmental ratio in response to light, promoting sexual development in the darkness while stimulating asexual sporulation under illumination. The velvet complex acts as a global regulator for secondary metabolite gene expression. Component of the velB-VosA heterodimeric complex that plays a dual role in activating genes associated with spore maturation and repressing certain development-associated genes. The complex binds DNA through the DNA-binding domain of vosA that recognizes an 11-nucleotide consensus sequence 5'-CTGGCCGCGGC-3' consisting of two motifs in the promoters of key developmental regulatory genes. Controls the expression of the pink pigment aurofusarin and the mycotoxin deoxynivalenol gene clusters. Regulates hyphae formation, hyphal hydrophobicity and conidiation. Regulates of cell wall integrity and pathogenicity. The protein is Velvet complex subunit B of Gibberella zeae (strain ATCC MYA-4620 / CBS 123657 / FGSC 9075 / NRRL 31084 / PH-1) (Wheat head blight fungus).